The chain runs to 129 residues: Azurin iso-2 (129 aa).

Residues 1 to 129 enclose the Plastocyanin-like domain; that stretch reads ASCETTVTSG…MMRGTLKLEE (129 aa). Cys-3 and Cys-26 are joined by a disulfide. 4 residues coordinate Cu cation: His-46, Cys-112, His-117, and Met-121.

The protein resides in the periplasm. This methylothroph organism uses azurin in the oxidation of methylamine. Iso-2 is probably the acceptor of electrons from methylamine dehydrogenase. The chain is Azurin iso-2 from Methylomonas sp. (strain J).